We begin with the raw amino-acid sequence, 300 residues long: Bidirectional sugar transporter SWEET12 (300 aa).

Topologically, residues M1–A4 are extracellular. Residues L5 to V25 traverse the membrane as a helical segment. The MtN3/slv 1 domain maps to A8–Q92. Residues P26–E38 lie on the Cytoplasmic side of the membrane. The helical transmembrane segment at S39–L61 threads the bilayer. The Extracellular segment spans residues T62 to L67. Residues L68–Y88 traverse the membrane as a helical segment. The Cytoplasmic segment spans residues A89–K99. A helical transmembrane segment spans residues L100–V120. Residues K121–T128 lie on the Extracellular side of the membrane. The helical transmembrane segment at L129–I149 threads the bilayer. The region spanning G131–K213 is the MtN3/slv 2 domain. Over R150–P162 the chain is Cytoplasmic. The chain crosses the membrane as a helical span at residues F163–M183. The Extracellular portion of the chain corresponds to K184–D185. Residues F186–Y206 form a helical membrane-spanning segment. Residues V207–A300 lie on the Cytoplasmic side of the membrane. Residues A256–A300 form a disordered region. A compositionally biased stretch (basic and acidic residues) spans P269 to V280. Residues I284–L294 show a composition bias toward pro residues.

It belongs to the SWEET sugar transporter family. Forms homooligomers and/or heterooligomers.

The protein localises to the cell membrane. Its function is as follows. Mediates both low-affinity uptake and efflux of sugar across the plasma membrane. Confers blight susceptibility. Confers TAL effector-mediated susceptibility to Xanthomonas oryzae pv. oryzae. The chain is Bidirectional sugar transporter SWEET12 (SWEET12) from Oryza sativa subsp. japonica (Rice).